A 609-amino-acid chain; its full sequence is Putative pectinesterase/pectinesterase inhibitor 45 (609 aa).

Residues 25-45 (IILGVVSVLVVAAAIIGGAFA) form a helical membrane-spanning segment. N-linked (GlcNAc...) asparagine glycans are attached at residues N51, N62, N100, N114, N183, N229, N296, N306, N346, and N362. A disordered region spans residues 54–87 (QEQGKTTNNKSKDSPTKSESPSPKPPSSAAQTVK). Residues 89–241 (GQVDKIIQTL…QVLTSNSLAM (153 aa)) are pectinesterase inhibitor 45. The tract at residues 296 to 593 (NATVAKDGSG…FTVGPFLQGE (298 aa)) is pectinesterase 45. Residues T371 and Q401 each contribute to the substrate site. D424 functions as the Proton donor; for pectinesterase activity in the catalytic mechanism. C438 and C458 are disulfide-bonded. The Nucleophile; for pectinesterase activity role is filled by D445. N491 is a glycosylation site (N-linked (GlcNAc...) asparagine). Positions 513 and 515 each coordinate substrate.

In the N-terminal section; belongs to the PMEI family. The protein in the C-terminal section; belongs to the pectinesterase family. As to expression, expressed in flower buds and pollen.

The protein localises to the membrane. The enzyme catalyses [(1-&gt;4)-alpha-D-galacturonosyl methyl ester](n) + n H2O = [(1-&gt;4)-alpha-D-galacturonosyl](n) + n methanol + n H(+). It functions in the pathway glycan metabolism; pectin degradation; 2-dehydro-3-deoxy-D-gluconate from pectin: step 1/5. Functionally, acts in the modification of cell walls via demethylesterification of cell wall pectin. This Arabidopsis thaliana (Mouse-ear cress) protein is Putative pectinesterase/pectinesterase inhibitor 45 (PME45).